The chain runs to 221 residues: Sugar transporter SWEET1 (221 aa).

Helical transmembrane passes span Ala3–Phe23, Val42–Ala62, Ile68–Leu88, Val96–Trp116, Leu129–Ala149, Leu160–Phe180, and Tyr186–Trp206. Positions Leu10 to Lys94 constitute a MtN3/slv 1 domain. The MtN3/slv 2 domain occupies Gln127–Gln212. The interval Ala149–Thr221 is mediates interaction with TRPV2.

It belongs to the SWEET sugar transporter family. As to quaternary structure, interacts with TRPV2; the interaction probably occurs intracellularly and depends on TRPV2 N-glycosylation. As to expression, ubiquitously expressed with highest expression in oviduct, epididymis and intestine.

It is found in the golgi apparatus membrane. The protein localises to the cell membrane. In terms of biological role, mediates sugar transport across membranes. May stimulate V(D)J recombination by the activation of RAG1. In Homo sapiens (Human), this protein is Sugar transporter SWEET1 (SLC50A1).